Consider the following 946-residue polypeptide: Villin-4 (946 aa).

Gelsolin-like repeat units follow at residues asparagine 28–lysine 109, valine 152–lysine 219, leucine 274–phenylalanine 339, and glutamate 641–phenylalanine 715. 2 disordered regions span residues alanine 744–arginine 783 and threonine 846–aspartate 902. Positions glutamine 765–histidine 777 are enriched in polar residues. The segment covering serine 874 to asparagine 883 has biased composition (acidic residues). The 66-residue stretch at aspartate 881–phenylalanine 946 folds into the HP domain.

The protein belongs to the villin/gelsolin family.

Its subcellular location is the cytoplasm. The protein localises to the cytoskeleton. Its function is as follows. Ca(2+)-regulated actin-binding protein. Binds actin microfilaments (MFs). Involved in actin filament bundling, severing and capping. Caps the barbed end of actin filaments and is able to sever them in a calcium-dependent manner. This Oryza sativa subsp. indica (Rice) protein is Villin-4.